We begin with the raw amino-acid sequence, 857 residues long: Glucans biosynthesis glucosyltransferase H (857 aa).

Transmembrane regions (helical) follow at residues 141 to 158 (YILL…GWYM), 197 to 219 (LILF…MGFL), 514 to 536 (AVFL…LVLS), 570 to 592 (VALF…ILIW), 605 to 627 (VTLS…MIFH), and 681 to 703 (SFLW…SVIS).

Belongs to the glycosyltransferase 2 family. OpgH subfamily.

Its subcellular location is the cell inner membrane. The protein operates within glycan metabolism; osmoregulated periplasmic glucan (OPG) biosynthesis. In terms of biological role, involved in the biosynthesis of osmoregulated periplasmic glucans (OPGs). The polypeptide is Glucans biosynthesis glucosyltransferase H (Pseudomonas putida (strain ATCC 47054 / DSM 6125 / CFBP 8728 / NCIMB 11950 / KT2440)).